The following is a 424-amino-acid chain: Acetyl-CoA acetyltransferase, mitochondrial (424 aa).

A mitochondrion-targeting transit peptide spans 1–30; that stretch reads MAALAVLHGVVRRPLLRGLLQEVRCLGRSY. At K63 the chain carries N6-acetyllysine; alternate. K63 bears the N6-succinyllysine; alternate mark. K75 carries the N6-succinyllysine modification. C123 (acyl-thioester intermediate) is an active-site residue. N6-acetyllysine; alternate occurs at positions 171, 178, 187, and 199. K171, K178, K187, and K199 each carry N6-succinyllysine; alternate. S204 is modified (phosphoserine). A CoA-binding site is contributed by Y216. Y216 is a binding site for K(+). An N6-acetyllysine; alternate mark is found at K220 and K227. An N6-succinyllysine; alternate mark is found at K220 and K227. At K240 the chain carries N6-succinyllysine. K242 carries the post-translational modification N6-acetyllysine; alternate. K242 carries the N6-succinyllysine; alternate modification. Residues K248 and K254 each carry the N6-acetyllysine modification. CoA contacts are provided by residues 255–257 and K260; that span reads RVD. K260 is modified (N6-acetyllysine; alternate). An N6-succinyllysine; alternate modification is found at K260. Residues K263 and K265 each carry the N6-succinyllysine modification. K270 carries the N6-acetyllysine modification. K(+) is bound by residues A277, A278, and A280. S281 lines the CoA pocket. K335 bears the N6-acetyllysine mark. A K(+)-binding site is contributed by V378. C410 functions as the Proton donor/acceptor in the catalytic mechanism.

Belongs to the thiolase-like superfamily. Thiolase family. In terms of assembly, homotetramer. Succinylation at Lys-265, adjacent to a coenzyme A binding site. Desuccinylated by SIRT5.

It is found in the mitochondrion. It carries out the reaction 2 acetyl-CoA = acetoacetyl-CoA + CoA. The catalysed reaction is propanoyl-CoA + acetyl-CoA = 2-methyl-3-oxobutanoyl-CoA + CoA. It participates in lipid metabolism; fatty acid beta-oxidation. Its activity is regulated as follows. Activated by potassium ions, but not sodium ions. Its function is as follows. This is one of the enzymes that catalyzes the last step of the mitochondrial beta-oxidation pathway, an aerobic process breaking down fatty acids into acetyl-CoA. Using free coenzyme A/CoA, catalyzes the thiolytic cleavage of medium- to long-chain 3-oxoacyl-CoAs into acetyl-CoA and a fatty acyl-CoA shortened by two carbon atoms. The activity of the enzyme is reversible and it can also catalyze the condensation of two acetyl-CoA molecules into acetoacetyl-CoA. Thereby, it plays a major role in ketone body metabolism. The sequence is that of Acetyl-CoA acetyltransferase, mitochondrial (Acat1) from Rattus norvegicus (Rat).